The following is a 350-amino-acid chain: Probable poly-beta-1,6-N-acetyl-D-glucosamine export protein (350 aa).

10 helical membrane passes run 8–28 (LVYL…LTQI), 40–60 (LVLQ…FIIL), 83–103 (YILI…SLLT), 119–139 (QWYG…YIIF), 146–166 (FNSK…LYYF), 182–202 (LSEN…AYMG), 216–236 (LVIM…LANG), 254–274 (IMFI…FNTI), 276–296 (MISA…DSLF), and 308–328 (VFLA…GMIL).

This sequence belongs to the acyltransferase 3 family.

Its subcellular location is the cell membrane. In terms of biological role, presumably involved in the export of the biofilm adhesin polysaccharide poly-beta-1,6-N-acetyl-D-glucosamine (PNAG, also referred to as PIA) across the cell membrane. The chain is Probable poly-beta-1,6-N-acetyl-D-glucosamine export protein (icaC) from Staphylococcus aureus (strain NCTC 8325 / PS 47).